A 92-amino-acid chain; its full sequence is MELRVIEKTDTELRIEIAGEDHTFMNVLKGVLLETDDVAAATYDMNPEQSGGQTEPVLTVKSESGDPLDVLAEGAESITDRTGALRDAVKAA.

This sequence belongs to the archaeal Rpo11/eukaryotic RPB11/RPC19 RNA polymerase subunit family. In terms of assembly, part of the RNA polymerase complex.

It is found in the cytoplasm. The enzyme catalyses RNA(n) + a ribonucleoside 5'-triphosphate = RNA(n+1) + diphosphate. Its function is as follows. DNA-dependent RNA polymerase (RNAP) catalyzes the transcription of DNA into RNA using the four ribonucleoside triphosphates as substrates. In Halorubrum lacusprofundi (strain ATCC 49239 / DSM 5036 / JCM 8891 / ACAM 34), this protein is DNA-directed RNA polymerase subunit Rpo11.